The following is a 188-amino-acid chain: dCTP deaminase (188 aa).

Residues 111–116 (KSTYAR), 135–137 (TLE), Gln156, Tyr170, and Gln180 each bind dCTP. Residue Glu137 is the Proton donor/acceptor of the active site.

It belongs to the dCTP deaminase family. As to quaternary structure, homotrimer.

The enzyme catalyses dCTP + H2O + H(+) = dUTP + NH4(+). It participates in pyrimidine metabolism; dUMP biosynthesis; dUMP from dCTP (dUTP route): step 1/2. Its function is as follows. Catalyzes the deamination of dCTP to dUTP. This chain is dCTP deaminase, found in Francisella tularensis subsp. tularensis (strain FSC 198).